Here is a 229-residue protein sequence, read N- to C-terminus: Uracil-DNA glycosylase (229 aa).

The Proton acceptor role is filled by Asp64.

This sequence belongs to the uracil-DNA glycosylase (UDG) superfamily. UNG family.

The protein localises to the cytoplasm. The enzyme catalyses Hydrolyzes single-stranded DNA or mismatched double-stranded DNA and polynucleotides, releasing free uracil.. Functionally, excises uracil residues from the DNA which can arise as a result of misincorporation of dUMP residues by DNA polymerase or due to deamination of cytosine. This chain is Uracil-DNA glycosylase, found in Salmonella choleraesuis (strain SC-B67).